The following is a 314-amino-acid chain: (-)-isopiperitenone reductase (314 aa).

Position 10 to 33 (10 to 33 (VTGANKGIGFEICRQLAEKGIIVI)) interacts with NADP(+). Serine 182 contacts substrate.

The protein belongs to the short-chain dehydrogenases/reductases (SDR) family.

It localises to the cytoplasm. The catalysed reaction is (2R,5R)-isopulegone + NADP(+) = (6R)-isopiperitenone + NADPH + H(+). The protein operates within secondary metabolite biosynthesis; terpenoid biosynthesis. Monoterpene synthase that catalyzes the specific reduction of the 1(2)-double bond of (-)-isopiperitenone to produce (+)-cis-isopulegone. Does not catalyze the reverse reaction. Unable to reduce (+)-pulegone, (+)-cis-isopulegone, (-)-menthone or the 1,2-double bond of (-)-carvone. Able to utilize NADH with 20% the efficiency of NADPH. This Mentha piperita (Peppermint) protein is (-)-isopiperitenone reductase.